The following is a 327-amino-acid chain: GTPase Obg (327 aa).

An Obg domain is found at His-2–Ile-160. One can recognise an OBG-type G domain in the interval Ala-161–Lys-326. Residues Gly-167–Ser-174, Phe-192–Ile-196, Asp-213–Gly-216, Ser-280–Asp-283, and Ser-307–Tyr-309 contribute to the GTP site. The Mg(2+) site is built by Ser-174 and Thr-194.

The protein belongs to the TRAFAC class OBG-HflX-like GTPase superfamily. OBG GTPase family. Monomer. It depends on Mg(2+) as a cofactor.

Its subcellular location is the cytoplasm. Its function is as follows. An essential GTPase which binds GTP, GDP and possibly (p)ppGpp with moderate affinity, with high nucleotide exchange rates and a fairly low GTP hydrolysis rate. Plays a role in control of the cell cycle, stress response, ribosome biogenesis and in those bacteria that undergo differentiation, in morphogenesis control. The protein is GTPase Obg of Borrelia recurrentis (strain A1).